Here is a 400-residue protein sequence, read N- to C-terminus: Serpin E3 (400 aa).

The first 19 residues, 1-19 (MQSLLLALLLLPVCSPGGA), serve as a signal peptide directing secretion. N46 carries an N-linked (GlcNAc...) asparagine glycan.

The protein belongs to the serpin family.

It localises to the secreted. Functionally, probable serine protease inhibitor. This is Serpin E3 (SERPINE3) from Bos taurus (Bovine).